A 681-amino-acid polypeptide reads, in one-letter code: DNA ligase (681 aa).

Residues 35-39, 84-85, and glutamate 115 each bind NAD(+); these read DAEYD and SL. Lysine 117 (N6-AMP-lysine intermediate) is an active-site residue. Residues arginine 138, glutamate 175, lysine 293, and lysine 317 each coordinate NAD(+). Cysteine 411, cysteine 414, cysteine 429, and cysteine 435 together coordinate Zn(2+). Residues 598–681 form the BRCT domain; it reads RTNLAVPGKT…SLLRDTSSSE (84 aa).

Belongs to the NAD-dependent DNA ligase family. LigA subfamily. It depends on Mg(2+) as a cofactor. The cofactor is Mn(2+).

The enzyme catalyses NAD(+) + (deoxyribonucleotide)n-3'-hydroxyl + 5'-phospho-(deoxyribonucleotide)m = (deoxyribonucleotide)n+m + AMP + beta-nicotinamide D-nucleotide.. Functionally, DNA ligase that catalyzes the formation of phosphodiester linkages between 5'-phosphoryl and 3'-hydroxyl groups in double-stranded DNA using NAD as a coenzyme and as the energy source for the reaction. It is essential for DNA replication and repair of damaged DNA. The protein is DNA ligase of Nitrosomonas europaea (strain ATCC 19718 / CIP 103999 / KCTC 2705 / NBRC 14298).